Consider the following 474-residue polypeptide: Alanine/serine racemase (474 aa).

Pyridoxal 5'-phosphate is bound by residues 139–140 and glutamine 282; that span reads GS. The residue at position 308 (lysine 308) is an N6-(pyridoxal phosphate)lysine. Residue threonine 336 participates in pyridoxal 5'-phosphate binding.

Belongs to the class-III pyridoxal-phosphate-dependent aminotransferase family. Homohexamer. Pyridoxal 5'-phosphate serves as cofactor.

The catalysed reaction is L-alanine = D-alanine. It catalyses the reaction L-serine = D-serine. Its activity is regulated as follows. Completely inhibited by hydroxylamine hydrochloride. Catalyzes the interconversion of L-alanine and D-alanine, and L-serine and D-serine. Has weak activity with valine and threonine. This chain is Alanine/serine racemase, found in Pyrococcus horikoshii (strain ATCC 700860 / DSM 12428 / JCM 9974 / NBRC 100139 / OT-3).